The chain runs to 260 residues: Snake venom serine protease homolog 2A (260 aa).

Positions 1–18 (MVLIRVLANLLILQLSYA) are cleaved as a signal peptide. Residues 19–24 (QKSSEL) constitute a propeptide that is removed on maturation. One can recognise a Peptidase S1 domain in the interval 25-251 (IIGGDECNIN…HLDWIKSIIA (227 aa)). 6 disulfides stabilise this stretch: Cys-31-Cys-165, Cys-52-Cys-68, Cys-100-Cys-258, Cys-144-Cys-212, Cys-176-Cys-191, and Cys-202-Cys-227. N-linked (GlcNAc...) asparagine glycans are attached at residues Asn-83, Asn-123, and Asn-124.

This sequence belongs to the peptidase S1 family. Snake venom subfamily. Expressed by the venom gland.

The protein localises to the secreted. Functionally, snake venom serine protease homolog that may act in the hemostasis system of the prey. In Craspedocephalus gramineus (Bamboo pit viper), this protein is Snake venom serine protease homolog 2A (TLG2A).